Here is a 549-residue protein sequence, read N- to C-terminus: Undecaprenyl phosphate-alpha-4-amino-4-deoxy-L-arabinose arabinosyl transferase 1 (549 aa).

12 helical membrane-spanning segments follow: residues 9-29 (LLLIAFGLFYLLPLATHGLWI), 80-102 (LFGVRVASALSTGLSVVLAYLLA), 112-132 (SLASALLYMSFTVVALQAGYA), 133-153 (NLDPQFTFWVNLSLVALWFTF), 176-196 (FMTKGFLAWLLPVLVALPYAI), 204-224 (LLIYGGIGVLVAILISLPWAL), 257-277 (WWYYLPLLVGFSVPWVLLLPA), 290-310 (SSGFLLLWLVLPLAFFSLSKG), 312-332 (LPAYILPCLLPLALLMGNTLV), 342-362 (LLAFNGVLNLVAGLLGLLALV), 377-397 (HLVLVYVLLLGWILSNLLQAM), and 402-422 (LWAAPALGSFLLVALAPAALP).

The protein belongs to the glycosyltransferase 83 family.

The protein localises to the cell inner membrane. It carries out the reaction 4-amino-4-deoxy-alpha-L-arabinopyranosyl di-trans,octa-cis-undecaprenyl phosphate + lipid IVA = lipid IIA + di-trans,octa-cis-undecaprenyl phosphate.. It functions in the pathway lipopolysaccharide metabolism; 4-amino-4-deoxy-beta-L-arabinose-lipid A biosynthesis. Functionally, catalyzes the transfer of the L-Ara4N moiety of the glycolipid undecaprenyl phosphate-alpha-L-Ara4N to lipid A. The modified arabinose is attached to lipid A and is required for resistance to polymyxin and cationic antimicrobial peptides. The protein is Undecaprenyl phosphate-alpha-4-amino-4-deoxy-L-arabinose arabinosyl transferase 1 of Pseudomonas fluorescens (strain ATCC BAA-477 / NRRL B-23932 / Pf-5).